Reading from the N-terminus, the 291-residue chain is Phosphoribulokinase (291 aa).

12-20 (GSSGAGTTS) is a binding site for ATP.

It belongs to the phosphoribulokinase family. In terms of assembly, homooctamer.

The catalysed reaction is D-ribulose 5-phosphate + ATP = D-ribulose 1,5-bisphosphate + ADP + H(+). The protein operates within carbohydrate biosynthesis; Calvin cycle. This is Phosphoribulokinase (cbbP) from Xanthobacter flavus.